The primary structure comprises 396 residues: NADH-quinone oxidoreductase subunit D (396 aa).

The protein belongs to the complex I 49 kDa subunit family. As to quaternary structure, NDH-1 is composed of 14 different subunits. Subunits NuoB, C, D, E, F, and G constitute the peripheral sector of the complex.

Its subcellular location is the cell inner membrane. The catalysed reaction is a quinone + NADH + 5 H(+)(in) = a quinol + NAD(+) + 4 H(+)(out). Functionally, NDH-1 shuttles electrons from NADH, via FMN and iron-sulfur (Fe-S) centers, to quinones in the respiratory chain. The immediate electron acceptor for the enzyme in this species is believed to be ubiquinone. Couples the redox reaction to proton translocation (for every two electrons transferred, four hydrogen ions are translocated across the cytoplasmic membrane), and thus conserves the redox energy in a proton gradient. This chain is NADH-quinone oxidoreductase subunit D, found in Rhizobium johnstonii (strain DSM 114642 / LMG 32736 / 3841) (Rhizobium leguminosarum bv. viciae).